We begin with the raw amino-acid sequence, 202 residues long: MARYRGPRLRVVRRLGELPGLTRKNARRAYPPGQHGQNRRKRSEYAIRLEEKQKLRFNYGVSEKQLIRYVRRARRATGSTGQTLLQLLEMRLDNTVFRLGMAGTIPAARQLVNHGHILVNDRVVDIASYQCRPGDVIKVRDQDKSRKLVQANMEYPGLANLPSHLEFDKNTLIGKVNGVIEREWIALNINELLVVEYYSRQA.

A disordered region spans residues threonine 22–serine 43. The S4 RNA-binding domain occupies methionine 90–asparagine 152.

This sequence belongs to the universal ribosomal protein uS4 family. In terms of assembly, part of the 30S ribosomal subunit. Contacts protein S5. The interaction surface between S4 and S5 is involved in control of translational fidelity.

One of the primary rRNA binding proteins, it binds directly to 16S rRNA where it nucleates assembly of the body of the 30S subunit. Functionally, with S5 and S12 plays an important role in translational accuracy. The polypeptide is Small ribosomal subunit protein uS4 (Gloeothece citriformis (strain PCC 7424) (Cyanothece sp. (strain PCC 7424))).